We begin with the raw amino-acid sequence, 109 residues long: RNA-binding protein Hfq (109 aa).

One can recognise a Sm domain in the interval 9-68; that stretch reads DPFLNALRKEKVSVSVYLVNGIKLQGQVEAFDQFCIVLRNTVNQMVYKHAISTIVPAKSV. A disordered region spans residues 77–109; that stretch reads PYHQNSNDEQDENVDDIHSDDLEIQENEGNIHE.

It belongs to the Hfq family. Homohexamer.

In terms of biological role, RNA chaperone that binds small regulatory RNA (sRNAs) and mRNAs to facilitate mRNA translational regulation in response to envelope stress, environmental stress and changes in metabolite concentrations. Also binds with high specificity to tRNAs. In Francisella tularensis subsp. holarctica (strain FTNF002-00 / FTA), this protein is RNA-binding protein Hfq.